The following is a 185-amino-acid chain: Elongation factor P (185 aa).

It belongs to the elongation factor P family.

It localises to the cytoplasm. The protein operates within protein biosynthesis; polypeptide chain elongation. Functionally, involved in peptide bond synthesis. Stimulates efficient translation and peptide-bond synthesis on native or reconstituted 70S ribosomes in vitro. Probably functions indirectly by altering the affinity of the ribosome for aminoacyl-tRNA, thus increasing their reactivity as acceptors for peptidyl transferase. In Dictyoglomus thermophilum (strain ATCC 35947 / DSM 3960 / H-6-12), this protein is Elongation factor P.